A 596-amino-acid polypeptide reads, in one-letter code: Polyphenol oxidase B, chloroplastic (596 aa).

Positions 1-23 are disordered; the sequence is MASVVCNSSSSTTTTTLKTPFTS. The N-terminal 87 residues, 1-87, are a transit peptide targeting the chloroplast; it reads MASVVCNSSS…ANAIPLAASA (87 aa). A compositionally biased stretch (low complexity) spans 8–23; the sequence is SSSSTTTTTLKTPFTS. 2 disulfide bridges follow: Cys98–Cys114 and Cys113–Cys182. Positions 181, 199, 208, 329, 333, and 371 each coordinate Cu cation. Positions 185-199 form a cross-link, 2'-(S-cysteinyl)-histidine (Cys-His); it reads CNGAYIIGGKELQVH.

It belongs to the tyrosinase family. The cofactor is Cu(2+).

It is found in the plastid. It localises to the chloroplast thylakoid lumen. It carries out the reaction 2 catechol + O2 = 2 1,2-benzoquinone + 2 H2O. Functionally, catalyzes the oxidation of mono- and o-diphenols to o-diquinones. The polypeptide is Polyphenol oxidase B, chloroplastic (Solanum lycopersicum (Tomato)).